A 248-amino-acid chain; its full sequence is tRNA pseudouridine synthase A (248 aa).

Residue D53 is the Nucleophile of the active site. Substrate is bound at residue Y111.

It belongs to the tRNA pseudouridine synthase TruA family. Homodimer.

It carries out the reaction uridine(38/39/40) in tRNA = pseudouridine(38/39/40) in tRNA. Functionally, formation of pseudouridine at positions 38, 39 and 40 in the anticodon stem and loop of transfer RNAs. The chain is tRNA pseudouridine synthase A from Streptococcus thermophilus (strain ATCC BAA-491 / LMD-9).